We begin with the raw amino-acid sequence, 206 residues long: MNNIYQKDLGLQQYTKVFDDMLEFTSTRTPETNDEIWLVEHPAVFTQGKHGKPEHILNSHNIPIVATDRGGQVTYHGPGQAVIYFLLDIKRNKLGAKKLVTTVEQACINMLDKYYNLKAHIIDGAHGIYINNQKIASLGLRIKQGKSYHGIAINTNMDLTPFSYINPCGYSGLKMCQLANFYQEADIKKVQQQYTAEFVTLLNNSI.

In terms of domain architecture, BPL/LPL catalytic spans 30–206; sequence PETNDEIWLV…EFVTLLNNSI (177 aa). Residues 69–76, 137–139, and 150–152 contribute to the substrate site; these read RGGQVTYH, SLG, and GIA. Cys168 (acyl-thioester intermediate) is an active-site residue.

This sequence belongs to the LipB family.

Its subcellular location is the cytoplasm. The catalysed reaction is octanoyl-[ACP] + L-lysyl-[protein] = N(6)-octanoyl-L-lysyl-[protein] + holo-[ACP] + H(+). It participates in protein modification; protein lipoylation via endogenous pathway; protein N(6)-(lipoyl)lysine from octanoyl-[acyl-carrier-protein]: step 1/2. Catalyzes the transfer of endogenously produced octanoic acid from octanoyl-acyl-carrier-protein onto the lipoyl domains of lipoate-dependent enzymes. Lipoyl-ACP can also act as a substrate although octanoyl-ACP is likely to be the physiological substrate. This Francisella tularensis subsp. tularensis (strain FSC 198) protein is Octanoyltransferase.